The chain runs to 340 residues: GTPase Obg (340 aa).

Residues 1-158 (MSFIDEAKVY…KYITLKLKII (158 aa)) form the Obg domain. The 167-residue stretch at 159 to 325 (SDIGIIGLPN…LSTLIQYIHK (167 aa)) folds into the OBG-type G domain. GTP contacts are provided by residues 165–172 (GLPNAGKS), 190–194 (FTTLE), 211–214 (DIPG), 278–281 (NKSD), and 306–308 (SSI). Residues S172 and T192 each coordinate Mg(2+).

It belongs to the TRAFAC class OBG-HflX-like GTPase superfamily. OBG GTPase family. Monomer. The cofactor is Mg(2+).

It is found in the cytoplasm. Its function is as follows. An essential GTPase which binds GTP, GDP and possibly (p)ppGpp with moderate affinity, with high nucleotide exchange rates and a fairly low GTP hydrolysis rate. Plays a role in control of the cell cycle, stress response, ribosome biogenesis and in those bacteria that undergo differentiation, in morphogenesis control. The sequence is that of GTPase Obg from Ehrlichia chaffeensis (strain ATCC CRL-10679 / Arkansas).